The following is a 419-amino-acid chain: MVTVEEVRNAQRAEGPATVLAIGTATPSNCVDQSTYPDYYFRITDSEHKTELKEKFKRICDKSMIKKRYMHLTEKILKENPNICESMAPSLDARTNIYAVEVPKLGKEAAEKAIEEWNQPKSRITHLVFCTTTGVSMPGADFQLTKLLGLGSSVKRFMMNQLGCFAGGTVLRLAKDLAENNKGARVLVVCSEITVVTFRGPNDTHFDSLVGQALFGDGAAAVIIGSDPIPNVERPLFELVSAAQTLLPDSKNSICGELREIGLTFHLLKDVAELISNNIEKSLVEVFQPLGISAWNSIFWVAHPGGPAILNQVELKLGLNPEKLGATRHVLSEYGNMSSASILFVLDEMRKSSTQKGFDTTGEGLKWGVLIGFGPGITFETIVLHSVSTQGSFGIRDWDYNFGIEFKIIFIPYLVLGIS.

Cys-164 is a catalytic residue.

This sequence belongs to the thiolase-like superfamily. Chalcone/stilbene synthases family.

The enzyme catalyses (E)-4-coumaroyl-CoA + 3 malonyl-CoA + 3 H(+) = 2',4,4',6'-tetrahydroxychalcone + 3 CO2 + 4 CoA. Its pathway is secondary metabolite biosynthesis; flavonoid biosynthesis. Functionally, the primary product of this enzyme is 4,2',4',6'-tetrahydroxychalcone (also termed naringenin-chalcone or chalcone) which can under specific conditions spontaneously isomerize into naringenin. The chain is Chalcone synthase D (CHSD) from Petunia hybrida (Petunia).